Reading from the N-terminus, the 784-residue chain is Toll-like receptor 2 (784 aa).

Positions 1–20 are cleaved as a signal peptide; that stretch reads MPHTLWMVWVLGVIISLSKE. Residues 21-588 lie on the Extracellular side of the membrane; that stretch reads ESSNQASLSC…RLSVSECHRT (568 aa). A disulfide bridge links Cys-30 with Cys-36. LRR repeat units follow at residues 54–77, 78–101, 102–125, 126–150, 151–175, 176–199, 200–223, 224–250, 251–278, 279–308, 309–337, 338–361, 362–388, 389–414, 415–437, 438–457, 458–478, 479–500, and 501–524; these read VKSL…RCVN, LQAL…SLGS, LEHL…PLSS, LTFL…HLTK, LQIL…GLTF, LEEL…SIQN, VSHL…VTSS, VECL…TNSL, IKKF…QISG, LLEL…DPGK, VETL…LTER, VKRI…HLKS, LEYL…AWPS, LQTL…TLKN, LTNI…WPEK, MKYL…CIPK, TLEI…NLPQ, LKEL…LLPM, and LLVL…SFHT. A glycan (N-linked (GlcNAc...) asparagine) is linked at Asn-114. Residue Asn-199 is glycosylated (N-linked (GlcNAc...) asparagine). Cys-353 and Cys-382 are disulfide-bonded. Residue Asn-414 is glycosylated (N-linked (GlcNAc...) asparagine). An intrachain disulfide couples Cys-432 to Cys-454. Asn-442 is a glycosylation site (N-linked (GlcNAc...) asparagine). Residues 525 to 579 enclose the LRRCT domain; that stretch reads LKTLEAGGNNFICSCEFLSFTQEQQALAKVLIDWPANYLCDSPSHVRGQQVQDVR. Residues 589–609 traverse the membrane as a helical segment; the sequence is ALVSGMCCALFLLILLTGVLC. The Cytoplasmic segment spans residues 610–784; it reads HRFHGLWYMK…WVNLRAAIKS (175 aa). The region spanning 639 to 782 is the TIR domain; the sequence is ICYDAFVSYS…GFWVNLRAAI (144 aa). Lys-754 is covalently cross-linked (Glycyl lysine isopeptide (Lys-Gly) (interchain with G-Cter in ubiquitin)). Residues 761-778 carry the ATG16L1-binding motif motif; that stretch reads YLEWPMDEAQREGFWVNL.

It belongs to the Toll-like receptor family. As to quaternary structure, interacts with LY96, TLR1 and TLR6 (via extracellular domain). TLR2 seems to exist in heterodimers with either TLR1 or TLR6 before stimulation by the ligand. The heterodimers form bigger oligomers in response to their corresponding ligands as well as further heterotypic associations with other receptors such as CD14 and/or CD36. Binds MYD88 (via TIR domain). Interacts with TICAM1. Interacts with CNPY3. Interacts with ATG16L1. Interacts with PPP1R11. Interacts with TICAM2. Interacts with TIRAP. In terms of assembly, (Microbial infection) Interacts with M.tuberculosis EsxA. (Microbial infection) Interacts with M.bovis MPB83. As to quaternary structure, (Microbial infection) Interacts with Staphylococcus aureus protein SSL5. In terms of processing, glycosylation of Asn-442 is critical for secretion of the N-terminal ectodomain of TLR2. Ubiquitinated at Lys-754 by PPP1R11, leading to its degradation. Deubiquitinated by USP2. Highly expressed in peripheral blood leukocytes, in particular in monocytes, in bone marrow, lymph node and in spleen. Also detected in lung and in fetal liver. Levels are low in other tissues.

The protein resides in the membrane. It localises to the cytoplasmic vesicle. The protein localises to the phagosome membrane. Its subcellular location is the membrane raft. Its function is as follows. Cooperates with LY96 to mediate the innate immune response to bacterial lipoproteins and other microbial cell wall components. Cooperates with TLR1 or TLR6 to mediate the innate immune response to bacterial lipoproteins or lipopeptides. Acts via MYD88 and TRAF6, leading to NF-kappa-B activation, cytokine secretion and the inflammatory response. May also activate immune cells and promote apoptosis in response to the lipid moiety of lipoproteins. Recognizes mycoplasmal macrophage-activating lipopeptide-2kD (MALP-2), soluble tuberculosis factor (STF), phenol-soluble modulin (PSM) and B.burgdorferi outer surface protein A lipoprotein (OspA-L) cooperatively with TLR6. Stimulation of monocytes in vitro with M.tuberculosis PstS1 induces p38 MAPK and ERK1/2 activation primarily via this receptor, but also partially via TLR4. MAPK activation in response to bacterial peptidoglycan also occurs via this receptor. Acts as a receptor for M.tuberculosis lipoproteins LprA, LprG, LpqH and PstS1, some lipoproteins are dependent on other coreceptors (TLR1, CD14 and/or CD36); the lipoproteins act as agonists to modulate antigen presenting cell functions in response to the pathogen. M.tuberculosis HSP70 (dnaK) but not HSP65 (groEL-2) acts via this protein to stimulate NF-kappa-B expression. Recognizes M.tuberculosis major T-antigen EsxA (ESAT-6) which inhibits downstream MYD88-dependent signaling (shown in mouse). Forms activation clusters composed of several receptors depending on the ligand, these clusters trigger signaling from the cell surface and subsequently are targeted to the Golgi in a lipid-raft dependent pathway. Forms the cluster TLR2:TLR6:CD14:CD36 in response to diacylated lipopeptides and TLR2:TLR1:CD14 in response to triacylated lipopeptides. Required for normal uptake of M.tuberculosis, a process that is inhibited by M.tuberculosis LppM. The sequence is that of Toll-like receptor 2 from Homo sapiens (Human).